The chain runs to 121 residues: MNFSTVFQAIIAVLGLTTVTALAEFDFDVGYEEFVRTNPDTIFLESDIGLHVGYTEGGERQIATIPHNSTLGTSLREYSGCGGNGTETSIATPAPTMSEVPIATFVKRRKSVPILLPQVCM.

Residues 1 to 23 form the signal peptide; sequence MNFSTVFQAIIAVLGLTTVTALA. N-linked (GlcNAc...) asparagine glycans are attached at residues N68 and N84.

In terms of processing, N-glycosylated.

This is an uncharacterized protein from Saccharomyces cerevisiae (strain ATCC 204508 / S288c) (Baker's yeast).